Reading from the N-terminus, the 334-residue chain is Biotin synthase (334 aa).

A Radical SAM core domain is found at 54–281 (QAIQLSTLLS…KSYVRLSAGR (228 aa)). Residues Cys69, Cys73, and Cys76 each coordinate [4Fe-4S] cluster. Cys113, Cys144, Cys204, and Arg276 together coordinate [2Fe-2S] cluster.

This sequence belongs to the radical SAM superfamily. Biotin synthase family. In terms of assembly, homodimer. The cofactor is [4Fe-4S] cluster. It depends on [2Fe-2S] cluster as a cofactor.

It catalyses the reaction (4R,5S)-dethiobiotin + (sulfur carrier)-SH + 2 reduced [2Fe-2S]-[ferredoxin] + 2 S-adenosyl-L-methionine = (sulfur carrier)-H + biotin + 2 5'-deoxyadenosine + 2 L-methionine + 2 oxidized [2Fe-2S]-[ferredoxin]. The protein operates within cofactor biosynthesis; biotin biosynthesis; biotin from 7,8-diaminononanoate: step 2/2. In terms of biological role, catalyzes the conversion of dethiobiotin (DTB) to biotin by the insertion of a sulfur atom into dethiobiotin via a radical-based mechanism. This Haemophilus ducreyi (strain 35000HP / ATCC 700724) protein is Biotin synthase.